We begin with the raw amino-acid sequence, 615 residues long: Putative binding protein BruAb2_0648 (615 aa).

The N-terminal stretch at Met-1 to Ala-29 is a signal peptide.

The protein belongs to the bacterial solute-binding protein 5 family.

The protein resides in the periplasm. The polypeptide is Putative binding protein BruAb2_0648 (Brucella abortus biovar 1 (strain 9-941)).